We begin with the raw amino-acid sequence, 61 residues long: UPF0434 protein Sama_1339 (61 aa).

It belongs to the UPF0434 family.

This is UPF0434 protein Sama_1339 from Shewanella amazonensis (strain ATCC BAA-1098 / SB2B).